The chain runs to 388 residues: Putative nickel insertion protein (388 aa).

Belongs to the LarC family.

This Geobacter sulfurreducens (strain ATCC 51573 / DSM 12127 / PCA) protein is Putative nickel insertion protein.